Reading from the N-terminus, the 1401-residue chain is DNA-directed RNA polymerase subunit beta' (1401 aa).

4 residues coordinate Zn(2+): cysteine 70, cysteine 72, cysteine 85, and cysteine 88. Mg(2+) contacts are provided by aspartate 460, aspartate 462, and aspartate 464. 4 residues coordinate Zn(2+): cysteine 808, cysteine 882, cysteine 889, and cysteine 892.

The protein belongs to the RNA polymerase beta' chain family. The RNAP catalytic core consists of 2 alpha, 1 beta, 1 beta' and 1 omega subunit. When a sigma factor is associated with the core the holoenzyme is formed, which can initiate transcription. Requires Mg(2+) as cofactor. The cofactor is Zn(2+).

It carries out the reaction RNA(n) + a ribonucleoside 5'-triphosphate = RNA(n+1) + diphosphate. Functionally, DNA-dependent RNA polymerase catalyzes the transcription of DNA into RNA using the four ribonucleoside triphosphates as substrates. This is DNA-directed RNA polymerase subunit beta' from Legionella pneumophila (strain Corby).